The sequence spans 112 residues: Cytochrome c 2.1 (112 aa).

4 residues coordinate heme c: Cys20, Cys23, His24, and Met85.

This sequence belongs to the cytochrome c family. Post-translationally, binds 1 heme c group covalently per subunit.

It is found in the mitochondrion intermembrane space. Functionally, electron carrier protein. The oxidized form of the cytochrome c heme group can accept an electron from the heme group of the cytochrome c1 subunit of cytochrome reductase. Cytochrome c then transfers this electron to the cytochrome oxidase complex, the final protein carrier in the mitochondrial electron-transport chain. The polypeptide is Cytochrome c 2.1 (Caenorhabditis briggsae).